The chain runs to 1182 residues: Exocyst complex component 4 (1182 aa).

Residues 236-250 (NKNSNSNNSNNTFKS) show a composition bias toward low complexity. 4 disordered regions span residues 236–262 (NKNS…PFKP), 376–427 (IPKM…SSNI), 525–545 (EETE…PKPT), and 921–968 (QQQQ…GSNN). Residues 392-409 (GSNGGGNNSMNGSGGING) show a composition bias toward gly residues. Residues 410–426 (NGSTASSSSPTSSTSSN) show a composition bias toward low complexity. Residues 921 to 932 (QQQQQQQQQQQQ) are compositionally biased toward low complexity. Positions 933–968 (VDSIKTPSKLNSGINSGGNSTASNKENNSTTTGSNN) are enriched in polar residues.

Belongs to the SEC8 family. In terms of assembly, the exocyst complex is composed of sec3/exoc1, sec5/exoc2, sec6/exoc3, sec8/exoc4, sec10/exoc5, sec15/exoc6, exo70/exoc7 and exo84/exoc8.

The protein resides in the midbody. Its subcellular location is the midbody ring. The protein localises to the cell projection. It localises to the cytoplasm. It is found in the cytoskeleton. The protein resides in the microtubule organizing center. Its subcellular location is the centrosome. Component of the exocyst complex involved in the docking of exocytic vesicles with fusion sites on the plasma membrane. The polypeptide is Exocyst complex component 4 (exoc4) (Dictyostelium discoideum (Social amoeba)).